The chain runs to 213 residues: dITP/XTP pyrophosphatase (213 aa).

17–22 (SNNAGK) provides a ligand contact to substrate. The active-site Proton acceptor is Asp-78. Asp-78 serves as a coordination point for Mg(2+). Residues Ser-79, 164-167 (FGYD), Lys-187, and 192-193 (HR) contribute to the substrate site.

The protein belongs to the HAM1 NTPase family. Homodimer. Mg(2+) serves as cofactor.

The enzyme catalyses XTP + H2O = XMP + diphosphate + H(+). It catalyses the reaction dITP + H2O = dIMP + diphosphate + H(+). The catalysed reaction is ITP + H2O = IMP + diphosphate + H(+). Functionally, pyrophosphatase that catalyzes the hydrolysis of nucleoside triphosphates to their monophosphate derivatives, with a high preference for the non-canonical purine nucleotides XTP (xanthosine triphosphate), dITP (deoxyinosine triphosphate) and ITP. Seems to function as a house-cleaning enzyme that removes non-canonical purine nucleotides from the nucleotide pool, thus preventing their incorporation into DNA/RNA and avoiding chromosomal lesions. In Bordetella parapertussis (strain 12822 / ATCC BAA-587 / NCTC 13253), this protein is dITP/XTP pyrophosphatase.